A 420-amino-acid chain; its full sequence is Dynein axonemal assembly factor 4 (420 aa).

Residues 3–87 (LQVSDYSWQQ…KEAAMWETLS (85 aa)) enclose the CS domain. The tract at residues 7 to 103 (DYSWQQTKTA…EMMQRIREKS (97 aa)) is mediates interaction with ESR1 and STUB1. TPR repeat units follow at residues 290–323 (PEWL…NNKM), 324–357 (PLLY…LMPP), and 366–399 (MKAH…DPSN).

As to quaternary structure, interacts with ZMYND10. Interacts with STUB1. Interacts with ESR1 and ESR2. Interacts with DNAAF2. Interacts with CCT3, CCT4, CCT5 and CCT8. Interacts with DNAAF6/PIH1D3.

It is found in the nucleus. The protein resides in the cytoplasm. Its subcellular location is the cell projection. It localises to the neuron projection. The protein localises to the dynein axonemal particle. Functionally, involved in neuronal migration during development of the cerebral neocortex. May regulate the stability and proteasomal degradation of the estrogen receptors that play an important role in neuronal differentiation, survival and plasticity. Axonemal dynein assembly factor required for ciliary motility. The sequence is that of Dynein axonemal assembly factor 4 from Pan paniscus (Pygmy chimpanzee).